The following is a 259-amino-acid chain: Insulin-induced gene 1 protein (259 aa).

Residues 1 to 66 (MPRLHDHVWN…ARPGSWHHDL (66 aa)) lie on the Cytoplasmic side of the membrane. Residues 36–55 (PGVPEPEHAPRGQRAGTTGC) are disordered. Residues 67 to 89 (VQRSLVLFSFGVVLALVLNLLQI) form a helical membrane-spanning segment. At 90-108 (QRNVTLFPDEVIATIFSSA) the chain is on the extracellular side. The helical transmembrane segment at 109–126 (WWVPPCCGTAAAVVGLLY) threads the bilayer. The Cytoplasmic portion of the chain corresponds to 127 to 141 (PCIDSHLGEPHKFKR). Residues Lys138 and Lys140 each participate in a glycyl lysine isopeptide (Lys-Gly) (interchain with G-Cter in ubiquitin) cross-link. Residues 142–164 (EWASVMRCIAVFVGINHASAKLD) form a helical membrane-spanning segment. Over 165–167 (FAN) the chain is Extracellular. Residues 168–186 (NVQLSLTLAALSLGLWWTF) form a helical membrane-spanning segment. The Cytoplasmic segment spans residues 187–191 (DRSRS). Ser189 is subject to Phosphoserine. A helical transmembrane segment spans residues 192–213 (GLGLGITIAFLATLITQFLVYN). The Extracellular portion of the chain corresponds to 214–227 (GVYQYTSPDFLYIR). A helical membrane pass occupies residues 228-245 (SWLPCIFFSGGVTVGNIG). The Cytoplasmic portion of the chain corresponds to 246–259 (RQLAMGVPEKPHSD). A KxHxx motif is present at residues 253-259 (PEKPHSD).

Belongs to the INSIG family. As to quaternary structure, interacts with SCAP; interaction is direct and only takes place in the presence of sterols; it prevents interaction between SCAP and the coat protein complex II (COPII). Associates with the SCAP-SREBP complex (composed of SCAP and SREBF1/SREBP1 or SREBF2/SREBP2); association is mediated via its interaction with SCAP and only takes place in the presence of sterols. Interaction with SCAP is mutually exclusive with PAQR3. Interacts with HMGCR (via its SSD); the interaction, accelerated by sterols, leads to the recruitment of HMGCR to AMFR/gp78 for its ubiquitination by the sterol-mediated ERAD pathway. Interacts with AMFR/gp78 (via its membrane domain); the interaction recruits HMCR at the ER membrane for its ubiquitination and degradation by the sterol-mediated ERAD pathway. Interacts with SOAT2/ACAT2; leading to promote recruitment of AMFR/gp78 and subsequent ubiquitination of SOAT2/ACAT2. Interacts with RNF139. Interacts with RNF145. In terms of processing, phosphorylation at Ser-189 by PCK1 reduces binding to oxysterol, disrupting the interaction between INSIG1 and SCAP, thereby promoting nuclear translocation of SREBP proteins (SREBF1/SREBP1 or SREBF2/SREBP2) and subsequent transcription of downstream lipogenesis-related genes. Post-translationally, ubiquitinated by AMFR/gp78 in response to sterol deprivation, leading to its degradation: when the SCAP-SREBP complex becomes dissociated from INSIG1, INSIG1 is then ubiquitinated and degraded in proteasomes. Although ubiquitination is required for rapid INSIG1 degradation, it is not required for release of the SCAP-SREBP complex. Ubiquitinated by RNF139.

It localises to the endoplasmic reticulum membrane. Its function is as follows. Oxysterol-binding protein that mediates feedback control of cholesterol synthesis by controlling both endoplasmic reticulum to Golgi transport of SCAP and degradation of HMGCR. Acts as a negative regulator of cholesterol biosynthesis by mediating the retention of the SCAP-SREBP complex in the endoplasmic reticulum, thereby blocking the processing of sterol regulatory element-binding proteins (SREBPs) SREBF1/SREBP1 and SREBF2/SREBP2. Binds oxysterol, including 25-hydroxycholesterol, regulating interaction with SCAP and retention of the SCAP-SREBP complex in the endoplasmic reticulum. In presence of oxysterol, interacts with SCAP, retaining the SCAP-SREBP complex in the endoplasmic reticulum, thereby preventing SCAP from escorting SREBF1/SREBP1 and SREBF2/SREBP2 to the Golgi. Sterol deprivation or phosphorylation by PCK1 reduce oxysterol-binding, disrupting the interaction between INSIG1 and SCAP, thereby promoting Golgi transport of the SCAP-SREBP complex, followed by processing and nuclear translocation of SREBF1/SREBP1 and SREBF2/SREBP2. Also regulates cholesterol synthesis by regulating degradation of HMGCR: initiates the sterol-mediated ubiquitin-mediated endoplasmic reticulum-associated degradation (ERAD) of HMGCR via recruitment of the reductase to the ubiquitin ligases AMFR/gp78 and/or RNF139. Also regulates degradation of SOAT2/ACAT2 when the lipid levels are low: initiates the ubiquitin-mediated degradation of SOAT2/ACAT2 via recruitment of the ubiquitin ligases AMFR/gp78. The protein is Insulin-induced gene 1 protein of Mus musculus (Mouse).